We begin with the raw amino-acid sequence, 596 residues long: Putative ankyrin repeat protein FPV024 (596 aa).

13 ANK repeats span residues 5–34 (KLRK…TFSN), 37–66 (ALST…DINK), 68–96 (KSPP…DIEK), 99–128 (LGNS…DPNT), 130–158 (FINY…SLNI), 162–191 (HFKT…SLTI), 195–225 (YNNH…PVNE), 229–258 (LERT…DPNI), 262–291 (CLGT…NVNI), 295–324 (TIDT…NTRL), 326–355 (SRNP…EVNI), 359–389 (EGYT…NPNM), and 394–423 (NENT…DVHS).

This chain is Putative ankyrin repeat protein FPV024, found in Fowlpox virus (strain NVSL) (FPV).